The primary structure comprises 709 residues: Polyribonucleotide nucleotidyltransferase (709 aa).

2 residues coordinate Mg(2+): aspartate 487 and aspartate 493. Residues 554-613 (PRIHTMKISSDKIKDVIGKGGAVIRALCEETGTTIEIEDDGTIKIAATEGAAAKEAIRRI) form the KH domain. Residues 623-691 (GKIYPGKVMR…RQGRIRLSIK (69 aa)) enclose the S1 motif domain.

Belongs to the polyribonucleotide nucleotidyltransferase family. As to quaternary structure, component of the RNA degradosome, which is a multiprotein complex involved in RNA processing and mRNA degradation. Mg(2+) serves as cofactor.

It localises to the cytoplasm. It catalyses the reaction RNA(n+1) + phosphate = RNA(n) + a ribonucleoside 5'-diphosphate. Involved in mRNA degradation. Catalyzes the phosphorolysis of single-stranded polyribonucleotides processively in the 3'- to 5'-direction. The chain is Polyribonucleotide nucleotidyltransferase from Aliivibrio salmonicida (strain LFI1238) (Vibrio salmonicida (strain LFI1238)).